Consider the following 92-residue polypeptide: Small cysteine and glycine repeat-containing protein 9 (92 aa).

Residues 4–72 (CGCGSCGCSG…CCRRTCSSCG (69 aa)) form an 11 X 2 AA repeats of CG region.

It belongs to the KRTAP type 28 family.

Its function is as follows. In the hair cortex, hair keratin intermediate filaments are embedded in an interfilamentous matrix, consisting of hair keratin-associated proteins (KRTAP), which are essential for the formation of a rigid and resistant hair shaft through their extensive disulfide bond cross-linking with abundant cysteine residues of hair keratins. The matrix proteins include the high-sulfur and high-glycine-tyrosine keratins. The sequence is that of Small cysteine and glycine repeat-containing protein 9 from Homo sapiens (Human).